The primary structure comprises 346 residues: Putative aminopeptidase YhfE (346 aa).

2 residues coordinate a divalent metal cation: histidine 68 and aspartate 185. Residue glutamate 219 is the Proton acceptor of the active site. 3 residues coordinate a divalent metal cation: glutamate 220, aspartate 240, and histidine 320.

It belongs to the peptidase M42 family. The cofactor is a divalent metal cation.

The polypeptide is Putative aminopeptidase YhfE (yhfE) (Bacillus subtilis (strain 168)).